A 399-amino-acid chain; its full sequence is Enoyl-[acyl-carrier-protein] reductase [NADH] (399 aa).

NAD(+) contacts are provided by residues 48 to 53 (GASTGY), 74 to 75 (FE), 111 to 112 (DA), and 139 to 140 (LA). Position 225 (Y225) interacts with substrate. Y235 serves as the catalytic Proton donor. NAD(+) is bound by residues K244 and 274–276 (VVT).

It belongs to the TER reductase family. Monomer.

It carries out the reaction a 2,3-saturated acyl-[ACP] + NAD(+) = a (2E)-enoyl-[ACP] + NADH + H(+). It functions in the pathway lipid metabolism; fatty acid biosynthesis. Its function is as follows. Involved in the final reduction of the elongation cycle of fatty acid synthesis (FAS II). Catalyzes the reduction of a carbon-carbon double bond in an enoyl moiety that is covalently linked to an acyl carrier protein (ACP). The sequence is that of Enoyl-[acyl-carrier-protein] reductase [NADH] from Yersinia pestis bv. Antiqua (strain Antiqua).